The sequence spans 222 residues: Urease accessory protein UreF (222 aa).

It belongs to the UreF family. UreD, UreF and UreG form a complex that acts as a GTP-hydrolysis-dependent molecular chaperone, activating the urease apoprotein by helping to assemble the nickel containing metallocenter of UreC. The UreE protein probably delivers the nickel.

The protein resides in the cytoplasm. Its function is as follows. Required for maturation of urease via the functional incorporation of the urease nickel metallocenter. The sequence is that of Urease accessory protein UreF from Roseobacter denitrificans (strain ATCC 33942 / OCh 114) (Erythrobacter sp. (strain OCh 114)).